The chain runs to 881 residues: Ent-kaurene synthase CPS/KS, chloroplastic (881 aa).

The N-terminal 41 residues, methionine 1–glutamine 41, are a transit peptide targeting the chloroplast. The Mg(2+) site is built by aspartate 417, aspartate 419, aspartate 635, aspartate 639, asparagine 778, aspartate 779, and glutamate 786. Residues aspartate 417 to alanine 422 carry the DXDDTA motif motif. Residues aspartate 635–aspartate 639 carry the DDXXD motif motif.

The protein belongs to the terpene synthase family. Mg(2+) is required as a cofactor.

It is found in the plastid. The protein localises to the chloroplast. It carries out the reaction (2E,6E,10E)-geranylgeranyl diphosphate = ent-copalyl diphosphate. The catalysed reaction is ent-copalyl diphosphate = ent-kaur-16-ene + diphosphate. The enzyme catalyses ent-copalyl diphosphate = ent-beyerene + diphosphate. It catalyses the reaction ent-copalyl diphosphate = ent-sandaracopimara-8(14),15-diene + diphosphate. It carries out the reaction ent-copalyl diphosphate = ent-isokaurene + diphosphate. The catalysed reaction is ent-copalyl diphosphate + H2O = 16alpha-hydroxy-ent-kaurene + diphosphate. The protein operates within secondary metabolite biosynthesis; terpenoid biosynthesis. In terms of biological role, bifunctional copalyl diphosphate/kaurene synthase involved in the biosynthesis of labdane-related diterpenoids (LRDs) natural products such as ent-beyerene, an antimicrobial compound. Supports the conversion of geranylgeranyl diphosphate (GGPP) to ent-copalyl diphosphate (ent-CDP). Also catalyzes the subsequent cyclization of ent-CDP into many diterpenes, including ent-kaur-16-ene as the major product, and ent-beyerene, ent-sandaracopimaradiene, ent-kaur-15-ene (ent-isokaurene) and 16-hydroxy-ent-kaurene (ent-16-alpha-hydroxy-kaurene) as minor products. This Physcomitrium patens (Spreading-leaved earth moss) protein is Ent-kaurene synthase CPS/KS, chloroplastic.